A 353-amino-acid chain; its full sequence is Dihydroorotate dehydrogenase (quinone) (353 aa).

FMN is bound by residues 66–70 (AGFDK) and Thr-90. Lys-70 contacts substrate. Position 115-119 (115-119 (NRMGF)) interacts with substrate. Asn-143 and Asn-176 together coordinate FMN. Substrate is bound at residue Asn-176. The active-site Nucleophile is Ser-179. Asn-181 serves as a coordination point for substrate. FMN-binding residues include Lys-212 and Thr-240. Substrate is bound at residue 241–242 (NT). Residues Gly-264, Gly-293, and 314–315 (YT) contribute to the FMN site.

It belongs to the dihydroorotate dehydrogenase family. Type 2 subfamily. In terms of assembly, monomer. The cofactor is FMN.

The protein localises to the cell membrane. It carries out the reaction (S)-dihydroorotate + a quinone = orotate + a quinol. The protein operates within pyrimidine metabolism; UMP biosynthesis via de novo pathway; orotate from (S)-dihydroorotate (quinone route): step 1/1. Its function is as follows. Catalyzes the conversion of dihydroorotate to orotate with quinone as electron acceptor. This is Dihydroorotate dehydrogenase (quinone) from Mycolicibacterium vanbaalenii (strain DSM 7251 / JCM 13017 / BCRC 16820 / KCTC 9966 / NRRL B-24157 / PYR-1) (Mycobacterium vanbaalenii).